A 180-amino-acid chain; its full sequence is NADH-quinone oxidoreductase subunit I (180 aa).

4Fe-4S ferredoxin-type domains follow at residues 50–80 (LTRD…LQKA) and 90–119 (EFFR…LTPD). Positions 60, 63, 66, 70, 99, 102, 105, and 109 each coordinate [4Fe-4S] cluster.

Belongs to the complex I 23 kDa subunit family. NDH-1 is composed of 13 different subunits. Subunits NuoA, H, J, K, L, M, N constitute the membrane sector of the complex. [4Fe-4S] cluster is required as a cofactor.

The protein localises to the cell inner membrane. The enzyme catalyses a quinone + NADH + 5 H(+)(in) = a quinol + NAD(+) + 4 H(+)(out). In terms of biological role, NDH-1 shuttles electrons from NADH, via FMN and iron-sulfur (Fe-S) centers, to quinones in the respiratory chain. The immediate electron acceptor for the enzyme in this species is believed to be ubiquinone. Couples the redox reaction to proton translocation (for every two electrons transferred, four hydrogen ions are translocated across the cytoplasmic membrane), and thus conserves the redox energy in a proton gradient. This is NADH-quinone oxidoreductase subunit I from Salmonella choleraesuis (strain SC-B67).